The following is a 207-amino-acid chain: Small ribosomal subunit protein uS4 (207 aa).

The interval 31 to 55 (KCKLDSKPGQHGRTSGARTSDYGTQ) is disordered. Polar residues predominate over residues 42–53 (GRTSGARTSDYG). An S4 RNA-binding domain is found at 97-157 (SRLDNVVYRM…EQKKKQARIL (61 aa)).

This sequence belongs to the universal ribosomal protein uS4 family. As to quaternary structure, part of the 30S ribosomal subunit. Contacts protein S5. The interaction surface between S4 and S5 is involved in control of translational fidelity.

One of the primary rRNA binding proteins, it binds directly to 16S rRNA where it nucleates assembly of the body of the 30S subunit. Functionally, with S5 and S12 plays an important role in translational accuracy. The polypeptide is Small ribosomal subunit protein uS4 (Paraburkholderia xenovorans (strain LB400)).